The primary structure comprises 280 residues: Formamidopyrimidine-DNA glycosylase (280 aa).

The Schiff-base intermediate with DNA role is filled by Pro2. Glu3 functions as the Proton donor in the catalytic mechanism. The active-site Proton donor; for beta-elimination activity is the Lys60. DNA contacts are provided by His93 and Arg112. The FPG-type zinc finger occupies 240–274 (YVYGQHSKPCRVCGADIIKIKVGGRGTHLCPTCQP). The Proton donor; for delta-elimination activity role is filled by Arg264.

It belongs to the FPG family. In terms of assembly, monomer. Requires Zn(2+) as cofactor.

It catalyses the reaction Hydrolysis of DNA containing ring-opened 7-methylguanine residues, releasing 2,6-diamino-4-hydroxy-5-(N-methyl)formamidopyrimidine.. It carries out the reaction 2'-deoxyribonucleotide-(2'-deoxyribose 5'-phosphate)-2'-deoxyribonucleotide-DNA = a 3'-end 2'-deoxyribonucleotide-(2,3-dehydro-2,3-deoxyribose 5'-phosphate)-DNA + a 5'-end 5'-phospho-2'-deoxyribonucleoside-DNA + H(+). In terms of biological role, involved in base excision repair of DNA damaged by oxidation or by mutagenic agents. Acts as a DNA glycosylase that recognizes and removes damaged bases. Has a preference for oxidized purines, such as 7,8-dihydro-8-oxoguanine (8-oxoG). Has AP (apurinic/apyrimidinic) lyase activity and introduces nicks in the DNA strand. Cleaves the DNA backbone by beta-delta elimination to generate a single-strand break at the site of the removed base with both 3'- and 5'-phosphates. The chain is Formamidopyrimidine-DNA glycosylase from Oceanobacillus iheyensis (strain DSM 14371 / CIP 107618 / JCM 11309 / KCTC 3954 / HTE831).